The following is a 432-amino-acid chain: 2-oxoglutarate-dependent dioxygenase AOP2 (432 aa).

In terms of domain architecture, Fe2OG dioxygenase spans 281–378 (SGDDVEANDD…RYTAAIFTCP (98 aa)). Positions 301, 303, and 358 each coordinate Fe cation. Arg369 provides a ligand contact to 2-oxoglutarate.

The protein belongs to the iron/ascorbate-dependent oxidoreductase family. The cofactor is Fe(2+).

2-oxoglutarate-dependent dioxygenase involved in glucosinolates biosynthesis. Catalyzes the conversion of methylsulfinylalkyl glucosinolates to alkenyl glucosinolates. The sequence is that of 2-oxoglutarate-dependent dioxygenase AOP2 (AOP2) from Arabidopsis thaliana (Mouse-ear cress).